A 126-amino-acid chain; its full sequence is Small ribosomal subunit protein uS13 (126 aa).

The interval 92-126 (RMGLPVRGQRTRTNARTRRGGRRTVAGKKKAPAKK) is disordered. Residues 100–126 (QRTRTNARTRRGGRRTVAGKKKAPAKK) show a composition bias toward basic residues.

It belongs to the universal ribosomal protein uS13 family. In terms of assembly, part of the 30S ribosomal subunit. Forms a loose heterodimer with protein S19. Forms two bridges to the 50S subunit in the 70S ribosome.

Located at the top of the head of the 30S subunit, it contacts several helices of the 16S rRNA. In the 70S ribosome it contacts the 23S rRNA (bridge B1a) and protein L5 of the 50S subunit (bridge B1b), connecting the 2 subunits; these bridges are implicated in subunit movement. Contacts the tRNAs in the A and P-sites. In Cyanothece sp. (strain PCC 7425 / ATCC 29141), this protein is Small ribosomal subunit protein uS13.